The sequence spans 228 residues: Endonuclease V (228 aa).

Asp-43 and Asp-109 together coordinate Mg(2+).

It belongs to the endonuclease V family. It depends on Mg(2+) as a cofactor.

The protein localises to the cytoplasm. The enzyme catalyses Endonucleolytic cleavage at apurinic or apyrimidinic sites to products with a 5'-phosphate.. DNA repair enzyme involved in the repair of deaminated bases. Selectively cleaves double-stranded DNA at the second phosphodiester bond 3' to a deoxyinosine leaving behind the intact lesion on the nicked DNA. This Dictyoglomus thermophilum (strain ATCC 35947 / DSM 3960 / H-6-12) protein is Endonuclease V.